A 344-amino-acid polypeptide reads, in one-letter code: Meiotically up-regulated gene 10 protein (344 aa).

The region spanning 48 to 207 is the DH domain; that stretch reads EFNSILQEII…RELCSYIDQE (160 aa).

The protein localises to the cytoplasm. Its subcellular location is the nucleus. Its function is as follows. Has a role in meiosis. This Schizosaccharomyces pombe (strain 972 / ATCC 24843) (Fission yeast) protein is Meiotically up-regulated gene 10 protein (mug10).